We begin with the raw amino-acid sequence, 325 residues long: Elongation factor P--(R)-beta-lysine ligase (325 aa).

76–78 (SPE) contacts substrate. ATP is bound by residues 100-102 (RNE) and asparagine 109. Tyrosine 118 contributes to the substrate binding site. 244-245 (EL) is an ATP binding site. Glutamate 251 lines the substrate pocket. An ATP-binding site is contributed by glycine 300.

It belongs to the class-II aminoacyl-tRNA synthetase family. EpmA subfamily. Homodimer.

It catalyses the reaction D-beta-lysine + L-lysyl-[protein] + ATP = N(6)-((3R)-3,6-diaminohexanoyl)-L-lysyl-[protein] + AMP + diphosphate + H(+). With EpmB is involved in the beta-lysylation step of the post-translational modification of translation elongation factor P (EF-P). Catalyzes the ATP-dependent activation of (R)-beta-lysine produced by EpmB, forming a lysyl-adenylate, from which the beta-lysyl moiety is then transferred to the epsilon-amino group of a conserved specific lysine residue in EF-P. This is Elongation factor P--(R)-beta-lysine ligase from Edwardsiella ictaluri (strain 93-146).